The chain runs to 88 residues: Probable Fe(2+)-trafficking protein (88 aa).

The protein belongs to the Fe(2+)-trafficking protein family.

In terms of biological role, could be a mediator in iron transactions between iron acquisition and iron-requiring processes, such as synthesis and/or repair of Fe-S clusters in biosynthetic enzymes. This Alkalilimnicola ehrlichii (strain ATCC BAA-1101 / DSM 17681 / MLHE-1) protein is Probable Fe(2+)-trafficking protein.